Reading from the N-terminus, the 107-residue chain is Ig kappa chain V-VI region SAPC 10 (107 aa).

A framework-1 region spans residues 1–23 (EIVLTQSPAITAASLGQKVTITC). C23 and C87 are oxidised to a cystine. The segment at 24–33 (SASSSVSYMH) is complementarity-determining-1. Residues 34–48 (WYQQKSGTSPKPWIY) form a framework-2 region. The tract at residues 49 to 55 (EISKLAS) is complementarity-determining-2. The tract at residues 56–87 (GVPARFSGSGSGTSYSLTISSMEAEDAAIYYC) is framework-3. Residues 88-96 (QQWNYPLIT) form a complementarity-determining-3 region. The interval 97-106 (FGGGTKLEIK) is framework-4.

This Mus musculus (Mouse) protein is Ig kappa chain V-VI region SAPC 10.